The sequence spans 453 residues: Histidine--tRNA ligase (453 aa).

This sequence belongs to the class-II aminoacyl-tRNA synthetase family. Homodimer.

It localises to the cytoplasm. The catalysed reaction is tRNA(His) + L-histidine + ATP = L-histidyl-tRNA(His) + AMP + diphosphate + H(+). In Cytophaga hutchinsonii (strain ATCC 33406 / DSM 1761 / CIP 103989 / NBRC 15051 / NCIMB 9469 / D465), this protein is Histidine--tRNA ligase.